A 358-amino-acid chain; its full sequence is UDP-N-acetylglucosamine--N-acetylmuramyl-(pentapeptide) pyrophosphoryl-undecaprenol N-acetylglucosamine transferase (358 aa).

Residues 10 to 12, Asn124, Arg165, Ser191, Ile246, and Gln291 contribute to the UDP-N-acetyl-alpha-D-glucosamine site; that span reads TGG.

The protein belongs to the glycosyltransferase 28 family. MurG subfamily.

It is found in the cell inner membrane. It carries out the reaction di-trans,octa-cis-undecaprenyl diphospho-N-acetyl-alpha-D-muramoyl-L-alanyl-D-glutamyl-meso-2,6-diaminopimeloyl-D-alanyl-D-alanine + UDP-N-acetyl-alpha-D-glucosamine = di-trans,octa-cis-undecaprenyl diphospho-[N-acetyl-alpha-D-glucosaminyl-(1-&gt;4)]-N-acetyl-alpha-D-muramoyl-L-alanyl-D-glutamyl-meso-2,6-diaminopimeloyl-D-alanyl-D-alanine + UDP + H(+). Its pathway is cell wall biogenesis; peptidoglycan biosynthesis. Cell wall formation. Catalyzes the transfer of a GlcNAc subunit on undecaprenyl-pyrophosphoryl-MurNAc-pentapeptide (lipid intermediate I) to form undecaprenyl-pyrophosphoryl-MurNAc-(pentapeptide)GlcNAc (lipid intermediate II). This Citrifermentans bemidjiense (strain ATCC BAA-1014 / DSM 16622 / JCM 12645 / Bem) (Geobacter bemidjiensis) protein is UDP-N-acetylglucosamine--N-acetylmuramyl-(pentapeptide) pyrophosphoryl-undecaprenol N-acetylglucosamine transferase.